Here is a 542-residue protein sequence, read N- to C-terminus: Chaperonin GroEL 1 (542 aa).

ATP is bound by residues 30–33 (TLGP), Lys-51, 87–91 (DGTTT), Gly-415, and Asp-496.

This sequence belongs to the chaperonin (HSP60) family. Forms a cylinder of 14 subunits composed of two heptameric rings stacked back-to-back. Interacts with the co-chaperonin GroES.

The protein localises to the cytoplasm. The enzyme catalyses ATP + H2O + a folded polypeptide = ADP + phosphate + an unfolded polypeptide.. In terms of biological role, together with its co-chaperonin GroES, plays an essential role in assisting protein folding. The GroEL-GroES system forms a nano-cage that allows encapsulation of the non-native substrate proteins and provides a physical environment optimized to promote and accelerate protein folding. This chain is Chaperonin GroEL 1, found in Sinorhizobium fredii (strain NBRC 101917 / NGR234).